A 304-amino-acid chain; its full sequence is Quinolinate synthase 1 (304 aa).

Iminosuccinate contacts are provided by His-24 and Ser-41. Residue Cys-86 participates in [4Fe-4S] cluster binding. Residues 112 to 114 (YVN) and Ser-129 each bind iminosuccinate. Cys-171 is a binding site for [4Fe-4S] cluster. Iminosuccinate is bound by residues 197-199 (HPE) and Thr-214. Position 259 (Cys-259) interacts with [4Fe-4S] cluster.

This sequence belongs to the quinolinate synthase family. Type 2 subfamily. Requires [4Fe-4S] cluster as cofactor.

The protein localises to the cytoplasm. It catalyses the reaction iminosuccinate + dihydroxyacetone phosphate = quinolinate + phosphate + 2 H2O + H(+). It functions in the pathway cofactor biosynthesis; NAD(+) biosynthesis; quinolinate from iminoaspartate: step 1/1. Catalyzes the condensation of iminoaspartate with dihydroxyacetone phosphate to form quinolinate. The chain is Quinolinate synthase 1 from Methanosarcina acetivorans (strain ATCC 35395 / DSM 2834 / JCM 12185 / C2A).